A 224-amino-acid polypeptide reads, in one-letter code: Transposase for insertion sequence element IS257 in transposon Tn4003 (224 aa).

Positions 33 to 52 form a DNA-binding region, H-T-H motif; sequence EILRGRGVNVHHSTVYRWVQ. Residues 73-222 form the Integrase catalytic domain; that stretch reads WRIDETYIKI…SPCHEISIML (150 aa).

Involved in the transposition of the insertion sequence. This Staphylococcus aureus protein is Transposase for insertion sequence element IS257 in transposon Tn4003.